We begin with the raw amino-acid sequence, 80 residues long: 14-3-3-like protein 1 (80 aa).

Belongs to the 14-3-3 family.

This is 14-3-3-like protein 1 from Pseudotsuga menziesii (Douglas-fir).